A 592-amino-acid polypeptide reads, in one-letter code: Beta-fructofuranosidase, insoluble isoenzyme 2 (592 aa).

Residues 1 to 40 form the signal peptide; sequence MLIRCFHIKMALVTCFHSMLFLSAVVFIFSLDVNIRGVEA. D75 is a catalytic residue. Residues N171, N195, N310, N347, and N568 are each glycosylated (N-linked (GlcNAc...) asparagine).

This sequence belongs to the glycosyl hydrolase 32 family.

It is found in the secreted. The protein localises to the cell wall. It carries out the reaction Hydrolysis of terminal non-reducing beta-D-fructofuranoside residues in beta-D-fructofuranosides.. Its function is as follows. May play an important role in phloem unloading and in stress response. This chain is Beta-fructofuranosidase, insoluble isoenzyme 2 (INV2), found in Daucus carota (Wild carrot).